The chain runs to 669 residues: MAINLLPPQLANQIAAGEVVERPASVVKELLENSLDAGATTIDIDIDKGGAKLIRIRDNGCGISRDDLKLALARHATSKISTLDDLEAIMSMGFRGEALASISSVSRLTLTSRTASQEEAWQAYAEGRDMTVAVKPAAHPVGSTVEVLDLFYNTPARRKFLRTEKTEFGHIDEVVRRIALSRFDVSINLTHNGKRVRQYRAAKETHQHHRRLSAICGNHFVDQAMQLTWEHGDLAIKGWVEHPLAPVQGSEIQYCYVNGRMMRDRLINHAIRQAYEGYLQGEQQPSYVLYLTVDPHQVDVNVHPAKHEVRFHESRLVHDFIYQAVLSVLRQVTEDTLSLDEEDNGALTATTFPENRQVAGENVFSQPYQAPVTSSTQKKSTGAYQGSAGKGLTDTQKSPQKTLDTRQFGESYQRTQGMLYQKMMQESASDVENKEKIPLFPPRPPLNLVDVGHTTNNNETNVISVVPRSVNASAAQTDYTFGRVLAIYQQKYALIESSQGLGLLALEEADFLLKCAQLLPENENLKPQPLLVPLKVTLSKDEINTFKQFQALISDFGIVIDISHGKATIHAVSLPLRQQNLPELLTKLLAYLATEKLCSKQQIGHWLAKQLSHESGVWSQAQAVGLLADIERLCPQYVRQPSKNLLQLIELQPVVAALNNERSKNANKT.

The disordered stretch occupies residues 361 to 409 (ENVFSQPYQAPVTSSTQKKSTGAYQGSAGKGLTDTQKSPQKTLDTRQFG). Polar residues-rich tracts occupy residues 363–384 (VFSQPYQAPVTSSTQKKSTGAY) and 393–402 (TDTQKSPQKT).

The protein belongs to the DNA mismatch repair MutL/HexB family.

Functionally, this protein is involved in the repair of mismatches in DNA. It is required for dam-dependent methyl-directed DNA mismatch repair. May act as a 'molecular matchmaker', a protein that promotes the formation of a stable complex between two or more DNA-binding proteins in an ATP-dependent manner without itself being part of a final effector complex. This is DNA mismatch repair protein MutL from Proteus mirabilis (strain HI4320).